The primary structure comprises 660 residues: DNA mismatch repair protein MutL (660 aa).

The segment at serine 414–asparagine 433 is disordered.

The protein belongs to the DNA mismatch repair MutL/HexB family.

This protein is involved in the repair of mismatches in DNA. It is required for dam-dependent methyl-directed DNA mismatch repair. May act as a 'molecular matchmaker', a protein that promotes the formation of a stable complex between two or more DNA-binding proteins in an ATP-dependent manner without itself being part of a final effector complex. This is DNA mismatch repair protein MutL from Streptococcus pyogenes serotype M6 (strain ATCC BAA-946 / MGAS10394).